Consider the following 378-residue polypeptide: Acetylornithine deacetylase (378 aa).

Histidine 76 contacts Zn(2+). Residue aspartate 78 is part of the active site. Aspartate 108 contacts Zn(2+). The active site involves glutamate 140. Zn(2+)-binding residues include glutamate 141, glutamate 165, and histidine 351.

This sequence belongs to the peptidase M20A family. ArgE subfamily. As to quaternary structure, homodimer. The cofactor is Zn(2+). Co(2+) serves as cofactor. Requires glutathione as cofactor.

The protein localises to the cytoplasm. It catalyses the reaction N(2)-acetyl-L-ornithine + H2O = L-ornithine + acetate. The protein operates within amino-acid biosynthesis; L-arginine biosynthesis; L-ornithine from N(2)-acetyl-L-ornithine (linear): step 1/1. Its function is as follows. Catalyzes the hydrolysis of the amide bond of N(2)-acetylated L-amino acids. Cleaves the acetyl group from N-acetyl-L-ornithine to form L-ornithine, an intermediate in L-arginine biosynthesis pathway, and a branchpoint in the synthesis of polyamines. The sequence is that of Acetylornithine deacetylase from Aliivibrio fischeri (strain MJ11) (Vibrio fischeri).